The chain runs to 234 residues: Small ribosomal subunit protein uS2 (234 aa).

This sequence belongs to the universal ribosomal protein uS2 family.

This is Small ribosomal subunit protein uS2 from Prochlorococcus marinus (strain MIT 9515).